Reading from the N-terminus, the 104-residue chain is Protein METHYLENE BLUE SENSITIVITY 2 (104 aa).

Residues 1–11 (MTGKAKPKKHT) show a composition bias toward basic residues. 2 disordered regions span residues 1-46 (MTGK…GHAK) and 64-104 (IHHE…SLKK). Composition is skewed to basic and acidic residues over residues 36–46 (RTGKEKGGHAK) and 73–82 (LTYEEPRNLH).

The protein resides in the nucleus. It is found in the cytoplasm. The protein localises to the stress granule. Required for acclimation to reactive oxygen species (ROS) responses downstream of beta-cyclocitral, including singlet oxygen 1O(2) detoxification reactions, especially upon light-mediated photooxidative stress, and leading to programmed cell death. Prevents leaf senescence. In Arabidopsis thaliana (Mouse-ear cress), this protein is Protein METHYLENE BLUE SENSITIVITY 2.